We begin with the raw amino-acid sequence, 143 residues long: Transcriptional regulator MraZ (143 aa).

2 consecutive SpoVT-AbrB domains span residues 5 to 47 (EYKH…PMHE) and 76 to 119 (ATEC…SSKR).

It belongs to the MraZ family. In terms of assembly, forms oligomers.

The protein localises to the cytoplasm. It is found in the nucleoid. The chain is Transcriptional regulator MraZ from Halothermothrix orenii (strain H 168 / OCM 544 / DSM 9562).